The primary structure comprises 20 residues: Photosystem II stability/assembly factor HCF136, chloroplastic (20 aa).

This sequence belongs to the Ycf48 family.

It localises to the plastid. The protein localises to the chloroplast thylakoid lumen. Essential for photosystem II (PSII) biogenesis; required for assembly of an early intermediate in PSII assembly that includes D2 (psbD) and cytochrome b559. The polypeptide is Photosystem II stability/assembly factor HCF136, chloroplastic (Spinacia oleracea (Spinach)).